A 110-amino-acid polypeptide reads, in one-letter code: Small ribosomal subunit protein bS18c (110 aa).

Belongs to the bacterial ribosomal protein bS18 family. In terms of assembly, part of the 30S ribosomal subunit.

It is found in the plastid. The protein localises to the chloroplast. This is Small ribosomal subunit protein bS18c (rps18) from Pisum sativum (Garden pea).